The chain runs to 244 residues: Protein FAM168A (244 aa).

Methionine 1 bears the N-acetylmethionine mark. Arginine 102 is modified (asymmetric dimethylarginine). Positions 107–126 (TPYKVPPTQSNTAPPPYSPS) are disordered.

This sequence belongs to the FAM168 family. Interacts with POLB. Interacts with AKT1 and MT1X. May interact with FAM168B.

Its function is as follows. In cancer context, protects cells from induced-DNA damage and apoptosis. Acts, at least in part, through PI3K/AKT/NFKB signaling pathway and by preventing POLB degradation. Decreases POLB ubiquitation and stabilizes its protein levels. In Mus musculus (Mouse), this protein is Protein FAM168A (Fam168a).